Here is a 54-residue protein sequence, read N- to C-terminus: UPF0391 membrane protein BAB1_1670 (54 aa).

The next 2 membrane-spanning stretches (helical) occupy residues 5–25 (VLVF…GIAG) and 29–48 (GIAQ…SLIA).

This sequence belongs to the UPF0391 family.

It localises to the cell membrane. The protein is UPF0391 membrane protein BAB1_1670 of Brucella abortus (strain 2308).